Here is a 300-residue protein sequence, read N- to C-terminus: Tyrosine recombinase XerC (300 aa).

Residues 2–88 (IQEGKLEQQF…SLRSFYTFLL (87 aa)) form the Core-binding (CB) domain. The 186-residue stretch at 109–294 (RLPKFFYSEE…TKEHLKSTYM (186 aa)) folds into the Tyr recombinase domain. Residues arginine 150, lysine 174, histidine 246, arginine 249, and histidine 272 contribute to the active site. Tyrosine 281 serves as the catalytic O-(3'-phospho-DNA)-tyrosine intermediate.

Belongs to the 'phage' integrase family. XerC subfamily. Forms a cyclic heterotetrameric complex composed of two molecules of XerC and two molecules of XerD.

The protein resides in the cytoplasm. Its function is as follows. Site-specific tyrosine recombinase, which acts by catalyzing the cutting and rejoining of the recombining DNA molecules. The XerC-XerD complex is essential to convert dimers of the bacterial chromosome into monomers to permit their segregation at cell division. It also contributes to the segregational stability of plasmids. The protein is Tyrosine recombinase XerC of Listeria monocytogenes serovar 1/2a (strain ATCC BAA-679 / EGD-e).